The primary structure comprises 384 residues: MAP kinase-activated protein kinase 3 (384 aa).

Residue Met-1 is modified to N-acetylmethionine. The tract at residues 1–33 (MDGETAGEKGSLVPPPGALGGSALGGAPAPGVR) is disordered. The Protein kinase domain occupies 46–306 (QLSKQVLGLG…IMQFMNHPWI (261 aa)). ATP is bound by residues 52–60 (LGLGVNGKV) and Lys-75. The active-site Proton acceptor is Asp-168. Thr-203 is modified (phosphothreonine; by MAPK14). Ser-253 carries the phosphoserine; by MAPK14 modification. Ser-309 is subject to Phosphoserine; by autocatalysis. An autoinhibitory helix region spans residues 309–345 (SMVVPQTPLYTARVLQEDKDHWDDVKEEMTSALATMR). Residue Thr-315 is modified to Phosphothreonine; by MAPK14. The Nuclear export signal (NES) signature appears at 337–346 (MTSALATMRV). The interval 347–371 (DYDQVKIKDLKTSNNRLLNKRRKKQ) is p38 MAPK-binding site. Short sequence motifs (bipartite nuclear localization signal) lie at residues 352–355 (KIKD) and 366–370 (KRRKK). The tract at residues 359–384 (SNNRLLNKRRKKQAGSSSASQGCNNQ) is disordered. The span at 372 to 384 (AGSSSASQGCNNQ) shows a compositional bias: polar residues.

It belongs to the protein kinase superfamily. CAMK Ser/Thr protein kinase family. Heterodimer with p38-alpha/MAPK14. The heterodimer with p38-alpha/MAPK14 forms a stable complex: molecules are positioned 'face to face' so that the ATP-binding sites of both kinases are at the heterodimer interface. Interacts with TCF3 and with polycomb proteins, such as PCH2 and BMI1/PCGF4. In terms of processing, phosphorylated and activated by MAPK1/ERK2 and MAPK3/ERK1. Phosphorylated and activated by MAP kinase p38-alpha/MAPK14 at Thr-201, Ser-251 and Thr-313. Isoform 3 is degraded following phosphorylation at Thr-203. Ubiquitously expressed (at protein level). Isoform 3 is expressed in skeletal muscles and heart.

It localises to the nucleus. It is found in the cytoplasm. The catalysed reaction is L-seryl-[protein] + ATP = O-phospho-L-seryl-[protein] + ADP + H(+). It carries out the reaction L-threonyl-[protein] + ATP = O-phospho-L-threonyl-[protein] + ADP + H(+). Activated following phosphorylation by p38-alpha/MAPK14 following various stresses. Inhibited by ligand 5B (2'-[2-(1,3-benzodioxol-5-yl)pyrimidin-4-yl]-5',6'-dihydrospiro[piperidine-4,7'-pyrrolo[3,2-c]pyridin]- 4'(1'h)-one) and ligand P4O (2-[2-(2-fluorophenyl)pyridin-4-yl]-1,5,6,7-tetrahydro- 4h-pyrrolo[3,2-c]pyridin-4-one), 2 ATP-competitive inhibitors. Functionally, stress-activated serine/threonine-protein kinase involved in cytokines production, endocytosis, cell migration, chromatin remodeling and transcriptional regulation. Following stress, it is phosphorylated and activated by MAP kinase p38-alpha/MAPK14, leading to phosphorylation of substrates. Phosphorylates serine in the peptide sequence, Hyd-X-R-X(2)-S, where Hyd is a large hydrophobic residue. MAPKAPK2 and MAPKAPK3, share the same function and substrate specificity, but MAPKAPK3 kinase activity and level in protein expression are lower compared to MAPKAPK2. Phosphorylates HSP27/HSPB1, KRT18, KRT20, RCSD1, RPS6KA3, TAB3 and TTP/ZFP36. Mediates phosphorylation of HSP27/HSPB1 in response to stress, leading to dissociate HSP27/HSPB1 from large small heat-shock protein (sHsps) oligomers and impair their chaperone activities and ability to protect against oxidative stress effectively. Involved in inflammatory response by regulating tumor necrosis factor (TNF) and IL6 production post-transcriptionally: acts by phosphorylating AU-rich elements (AREs)-binding proteins, such as TTP/ZFP36, leading to regulate the stability and translation of TNF and IL6 mRNAs. Phosphorylation of TTP/ZFP36, a major post-transcriptional regulator of TNF, promotes its binding to 14-3-3 proteins and reduces its ARE mRNA affinity leading to inhibition of dependent degradation of ARE-containing transcript. Involved in toll-like receptor signaling pathway (TLR) in dendritic cells: required for acute TLR-induced macropinocytosis by phosphorylating and activating RPS6KA3. Also acts as a modulator of Polycomb-mediated repression. The protein is MAP kinase-activated protein kinase 3 (Mapkapk3) of Mus musculus (Mouse).